The following is a 162-amino-acid chain: Endoribonuclease YbeY (162 aa).

3 residues coordinate Zn(2+): His-117, His-121, and His-127.

Belongs to the endoribonuclease YbeY family. Zn(2+) is required as a cofactor.

The protein localises to the cytoplasm. Single strand-specific metallo-endoribonuclease involved in late-stage 70S ribosome quality control and in maturation of the 3' terminus of the 16S rRNA. The protein is Endoribonuclease YbeY of Francisella tularensis subsp. mediasiatica (strain FSC147).